The primary structure comprises 135 residues: Large ribosomal subunit protein uL16c (135 aa).

It belongs to the universal ribosomal protein uL16 family. Part of the 50S ribosomal subunit.

The protein resides in the plastid. It localises to the chloroplast. This chain is Large ribosomal subunit protein uL16c, found in Stigeoclonium helveticum (Green alga).